A 106-amino-acid chain; its full sequence is Small ribosomal subunit protein uS10 (106 aa).

This sequence belongs to the universal ribosomal protein uS10 family. In terms of assembly, part of the 30S ribosomal subunit.

Its function is as follows. Involved in the binding of tRNA to the ribosomes. The protein is Small ribosomal subunit protein uS10 of Mesomycoplasma hyopneumoniae (strain 232) (Mycoplasma hyopneumoniae).